The sequence spans 703 residues: Polyribonucleotide nucleotidyltransferase (703 aa).

D487 and D493 together coordinate Mg(2+). The KH domain occupies 554–613; it reads PKMETIKIDPDKIRDVIGKGGATIRSICEDTGASIDIDDNGTVRIYAESKLAADEAIYRI. An S1 motif domain is found at 623 to 691; the sequence is GKLYRGKVER…ARGRIKLSMK (69 aa).

It belongs to the polyribonucleotide nucleotidyltransferase family. Component of the RNA degradosome, which is a multiprotein complex involved in RNA processing and mRNA degradation. Requires Mg(2+) as cofactor.

The protein resides in the cytoplasm. It catalyses the reaction RNA(n+1) + phosphate = RNA(n) + a ribonucleoside 5'-diphosphate. Its function is as follows. Involved in mRNA degradation. Catalyzes the phosphorolysis of single-stranded polyribonucleotides processively in the 3'- to 5'-direction. The protein is Polyribonucleotide nucleotidyltransferase of Hahella chejuensis (strain KCTC 2396).